Consider the following 757-residue polypeptide: Polyribonucleotide nucleotidyltransferase (757 aa).

Aspartate 482 and aspartate 488 together coordinate Mg(2+). The 60-residue stretch at 549–608 folds into the KH domain; sequence PRMLSFYIDKDKISAAIGSKGKNIRSVCERSNAKIEIGDDGKVSVFATSGTEAEIAKSMM. The S1 motif domain maps to 618 to 686; sequence GSIVDVKVVR…KGGCPKLSRR (69 aa). The segment at 698-757 is disordered; the sequence is GELYNEERKDGPNDRDNYYNNSFSRKPGGSHHKRPPRPHSGFSNRNRPKFGNNDSSSGFY. A compositionally biased stretch (basic and acidic residues) spans 702–714; it reads NEERKDGPNDRDN. Basic residues predominate over residues 725-734; the sequence is GGSHHKRPPR.

Belongs to the polyribonucleotide nucleotidyltransferase family. Requires Mg(2+) as cofactor.

It localises to the cytoplasm. The enzyme catalyses RNA(n+1) + phosphate = RNA(n) + a ribonucleoside 5'-diphosphate. In terms of biological role, involved in mRNA degradation. Catalyzes the phosphorolysis of single-stranded polyribonucleotides processively in the 3'- to 5'-direction. In Wolbachia pipientis wMel, this protein is Polyribonucleotide nucleotidyltransferase.